A 231-amino-acid polypeptide reads, in one-letter code: PIAGSMVLAAILLKLGGYGIIRMMQILPTTKTDLFLPFIVLALWGAILANLTCLQQTDLKSLIAYSSISHMGLVVAAIIIQTPWGLSGAMALMIAHGFTSSALFCLANTTYERTHTRILILTRGFHNILPMATTWWLVTNLMNIAIPPSMNFTGELLIMSALFNWCPTTIIMLGLSMLITASYSLHMFLSTQMGPTMLNNQTEPMHSREHLLIALHLAPLLMISLKPELVI.

The next 7 membrane-spanning stretches (helical) occupy residues 1-21, 34-54, 63-85, 89-111, 128-148, 156-176, and 211-231; these read PIAG…YGII, LFLP…LTCL, IAYS…TPWG, AMAL…NTTY, ILPM…AIPP, LLIM…LGLS, and LLIA…ELVI.

It belongs to the complex I subunit 4 family.

The protein localises to the mitochondrion membrane. The enzyme catalyses a ubiquinone + NADH + 5 H(+)(in) = a ubiquinol + NAD(+) + 4 H(+)(out). In terms of biological role, core subunit of the mitochondrial membrane respiratory chain NADH dehydrogenase (Complex I) that is believed to belong to the minimal assembly required for catalysis. Complex I functions in the transfer of electrons from NADH to the respiratory chain. The immediate electron acceptor for the enzyme is believed to be ubiquinone. This is NADH-ubiquinone oxidoreductase chain 4 (MT-ND4) from Crotalus adamanteus (Eastern diamondback rattlesnake).